A 199-amino-acid chain; its full sequence is Peroxiredoxin-1 (199 aa).

The Thioredoxin domain maps to Ala6–Phe165. Catalysis depends on Cys52, which acts as the Cysteine sulfenic acid (-SOH) intermediate.

The protein belongs to the peroxiredoxin family. AhpC/Prx1 subfamily. In terms of assembly, homodimer; disulfide-linked, upon oxidation. 5 homodimers assemble to form a ring-like decamer. Interacts with GDPD5; forms a mixed-disulfide with GDPD5. Interacts with SESN1 and SESN2. Post-translationally, the enzyme can be inactivated by further oxidation of the cysteine sulfenic acid (C(P)-SOH) to sulphinic acid (C(P)-SO2H) instead of its condensation to a disulfide bond. It can be reactivated by forming a transient disulfide bond with sulfiredoxin SRXN1, which reduces the cysteine sulfinic acid in an ATP- and Mg-dependent manner.

It localises to the cytoplasm. The catalysed reaction is a hydroperoxide + [thioredoxin]-dithiol = an alcohol + [thioredoxin]-disulfide + H2O. Thiol-specific peroxidase that catalyzes the reduction of hydrogen peroxide and organic hydroperoxides to water and alcohols, respectively. Plays a role in cell protection against oxidative stress by detoxifying peroxides and as sensor of hydrogen peroxide-mediated signaling events. Might participate in the signaling cascades of growth factors and tumor necrosis factor-alpha by regulating the intracellular concentrations of H(2)O(2). Reduces an intramolecular disulfide bond in GDPD5 that gates the ability to GDPD5 to drive postmitotic motor neuron differentiation. This chain is Peroxiredoxin-1 (PRDX1), found in Gallus gallus (Chicken).